The following is a 276-amino-acid chain: NH(3)-dependent NAD(+) synthetase (276 aa).

An ATP-binding site is contributed by 43 to 50; that stretch reads GISGGVDS. Residue D49 coordinates Mg(2+). R146 contacts deamido-NAD(+). T166 contributes to the ATP binding site. E171 serves as a coordination point for Mg(2+). The deamido-NAD(+) site is built by K179 and D186. ATP contacts are provided by K195 and T217. 266-267 contributes to the deamido-NAD(+) binding site; it reads HK.

Belongs to the NAD synthetase family. In terms of assembly, homodimer.

It catalyses the reaction deamido-NAD(+) + NH4(+) + ATP = AMP + diphosphate + NAD(+) + H(+). The protein operates within cofactor biosynthesis; NAD(+) biosynthesis; NAD(+) from deamido-NAD(+) (ammonia route): step 1/1. In terms of biological role, catalyzes the ATP-dependent amidation of deamido-NAD to form NAD. Uses ammonia as a nitrogen source. The sequence is that of NH(3)-dependent NAD(+) synthetase from Shewanella pealeana (strain ATCC 700345 / ANG-SQ1).